Here is a 274-residue protein sequence, read N- to C-terminus: Energy-coupling factor transporter ATP-binding protein EcfA (274 aa).

In terms of domain architecture, ABC transporter spans 2–235; it reads IRLENVSYNY…LSLRYLGLTP (234 aa). An ATP-binding site is contributed by 35–42; sequence GKNGSGKS.

Belongs to the ABC transporter superfamily. Energy-coupling factor EcfA family. Forms a stable energy-coupling factor (ECF) transporter complex composed of 2 membrane-embedded substrate-binding proteins (S component), 2 ATP-binding proteins (A component) and 2 transmembrane proteins (T component).

The protein resides in the cell membrane. Functionally, ATP-binding (A) component of a common energy-coupling factor (ECF) ABC-transporter complex. Unlike classic ABC transporters this ECF transporter provides the energy necessary to transport a number of different substrates. The protein is Energy-coupling factor transporter ATP-binding protein EcfA of Methanosarcina acetivorans (strain ATCC 35395 / DSM 2834 / JCM 12185 / C2A).